The primary structure comprises 341 residues: Probable GDP-mannose transporter 2 (341 aa).

Residues 1 to 11 are Cytoplasmic-facing; sequence MSKHKHEWTES. A helical transmembrane segment spans residues 12–32; it reads VANSGPASILSYCASSILMTV. The Lumenal segment spans residues 33–46; the sequence is TNKFVVNLDNFNMN. The chain crosses the membrane as a helical span at residues 47–67; sequence FVMLFVQSLVCTVTLCILRIV. Residues 68–85 lie on the Cytoplasmic side of the membrane; that stretch reads GVANFRSLNRTDVKNWFP. The helical transmembrane segment at 86–106 threads the bilayer; the sequence is ISLLLVLMIYTSLKSLQYLAV. Position 107 (Pro107) is a topological domain, lumenal. Residues 108–128 traverse the membrane as a helical segment; it reads IYTIFKNLTIILIAYGEVLFF. Over 129-139 the chain is Cytoplasmic; that stretch reads GGKVTSMELTS. A helical membrane pass occupies residues 140–160; that stretch reads FIMMVLSSVVATWGDQQAIAI. The Lumenal segment spans residues 161–176; the sequence is KASSLEDLDQELVEST. The chain crosses the membrane as a helical span at residues 177–197; sequence IFVLNPGYLWMFTNCISSALF. The Cytoplasmic segment spans residues 198–214; that stretch reads VLIMRKRIRLTNFKDYD. A helical membrane pass occupies residues 215-235; sequence TMFYNNVLALPLLLVFSFIME. The Lumenal portion of the chain corresponds to 236 to 251; sequence DWSTKNLSVNLSADSL. Asn241 and Asn245 each carry an N-linked (GlcNAc...) asparagine glycan. Residues 252 to 272 form a helical membrane-spanning segment; sequence AAMVISGLMSVGISYCSGWCV. Over 273–278 the chain is Cytoplasmic; the sequence is RVTSST. Residues 279–299 form a helical membrane-spanning segment; the sequence is TYSMVGALNKLPIALAGLVFF. Over 300–303 the chain is Lumenal; it reads DAPK. Residues 304–324 traverse the membrane as a helical segment; it reads NFLSFFSIFLGFLSGLLYAVA. Residues 325–341 lie on the Cytoplasmic side of the membrane; the sequence is KQKKIQQQKVLAATLEK.

Belongs to the TPT transporter family. SLC35D subfamily.

The protein resides in the golgi apparatus membrane. It localises to the cytoplasmic vesicle membrane. It is found in the endoplasmic reticulum membrane. Functionally, involved in the import of GDP-mannose from the cytoplasm into the Golgi lumen. This chain is Probable GDP-mannose transporter 2 (HVG1), found in Saccharomyces cerevisiae (strain Lalvin EC1118 / Prise de mousse) (Baker's yeast).